We begin with the raw amino-acid sequence, 91 residues long: Small ribosomal subunit protein uS19 (91 aa).

It belongs to the universal ribosomal protein uS19 family.

Its function is as follows. Protein S19 forms a complex with S13 that binds strongly to the 16S ribosomal RNA. In Dechloromonas aromatica (strain RCB), this protein is Small ribosomal subunit protein uS19.